We begin with the raw amino-acid sequence, 877 residues long: Translation initiation factor IF-2 (877 aa).

The disordered stretch occupies residues 48 to 289 (SSFQNSAPAE…QITKRKERPL (242 aa)). Over residues 78-89 (RKNEKKPEENNT) the composition is skewed to basic and acidic residues. Basic residues predominate over residues 92 to 101 (KSNRRRNNKR). Over residues 102–116 (RSSDRARDNKERDAK) the composition is skewed to basic and acidic residues. Over residues 123-132 (KAAALLQQFK) the composition is skewed to low complexity. 2 stretches are compositionally biased toward basic and acidic residues: residues 135-155 (QRAE…EYHE) and 162-189 (KEQS…EKKV). The span at 277 to 286 (PRKQITKRKE) shows a compositional bias: basic residues. The tr-type G domain maps to 378–547 (KRPPVVTIMG…LLQADVMELK (170 aa)). Positions 387 to 394 (GHVDHGKT) are G1. 387–394 (GHVDHGKT) provides a ligand contact to GTP. The interval 412 to 416 (GITQR) is G2. Residues 433-436 (DTPG) form a G3 region. GTP is bound by residues 433–437 (DTPGH) and 487–490 (NKMD). The tract at residues 487–490 (NKMD) is G4. The segment at 523–525 (SAK) is G5.

Belongs to the TRAFAC class translation factor GTPase superfamily. Classic translation factor GTPase family. IF-2 subfamily.

It is found in the cytoplasm. One of the essential components for the initiation of protein synthesis. Protects formylmethionyl-tRNA from spontaneous hydrolysis and promotes its binding to the 30S ribosomal subunits. Also involved in the hydrolysis of GTP during the formation of the 70S ribosomal complex. This chain is Translation initiation factor IF-2, found in Lactobacillus acidophilus (strain ATCC 700396 / NCK56 / N2 / NCFM).